Reading from the N-terminus, the 656-residue chain is Chromosomal replication initiator protein DnaA (656 aa).

Positions 1-100 (MADVPADLAA…TAGEPAGPAP (100 aa)) are domain I, interacts with DnaA modulators. The interval 91–313 (TAGEPAGPAP…PAPATGPGEP (223 aa)) is disordered. Pro residues predominate over residues 97–109 (GPAPQAPQSPPSR). Residues 101–315 (QAPQSPPSRP…PATGPGEPTA (215 aa)) form a domain II region. Composition is skewed to basic and acidic residues over residues 126–144 (GREE…RNRA) and 231–273 (QRGD…RDLP). The span at 291–313 (GPATGAPGPLAAQPAPATGPGEP) shows a compositional bias: low complexity. The domain III, AAA+ region stretch occupies residues 316 to 532 (RLNPKYLFDT…GALIRVTAFA (217 aa)). Residues G360, G362, K363, and T364 each contribute to the ATP site. Positions 533–656 (SLNRQPVDLG…TELTNRIKNG (124 aa)) are domain IV, binds dsDNA.

It belongs to the DnaA family. As to quaternary structure, oligomerizes as a right-handed, spiral filament on DNA at oriC.

It localises to the cytoplasm. Functionally, plays an essential role in the initiation and regulation of chromosomal replication. ATP-DnaA binds to the origin of replication (oriC) to initiate formation of the DNA replication initiation complex once per cell cycle. Binds the DnaA box (a 9 base pair repeat at the origin) and separates the double-stranded (ds)DNA. Forms a right-handed helical filament on oriC DNA; dsDNA binds to the exterior of the filament while single-stranded (ss)DNA is stabiized in the filament's interior. The ATP-DnaA-oriC complex binds and stabilizes one strand of the AT-rich DNA unwinding element (DUE), permitting loading of DNA polymerase. After initiation quickly degrades to an ADP-DnaA complex that is not apt for DNA replication. Binds acidic phospholipids. This Streptomyces coelicolor (strain ATCC BAA-471 / A3(2) / M145) protein is Chromosomal replication initiator protein DnaA.